A 757-amino-acid chain; its full sequence is Subtilisin-like protease SBT1.7 (757 aa).

Positions 1-24 are cleaved as a signal peptide; that stretch reads MSSSFLSSTAFFLLLCLGFCHVSS. Positions 25 to 106 are excised as a propeptide; sequence SSSDQGTYIV…VLPEHRYELH (82 aa). The Inhibitor I9 domain maps to 31–106; that stretch reads TYIVHMAKSQ…VLPEHRYELH (76 aa). The region spanning 102-610 is the Peptidase S8 domain; the sequence is RYELHTTRTP…AGHVSPTTAT (509 aa). Asp139 acts as the Charge relay system in catalysis. An N-linked (GlcNAc...) asparagine glycan is attached at Asn170. The disordered stretch occupies residues 196–219; it reads PIDESKESRSPRDDDGHGTHTSST. Over residues 198-213 the composition is skewed to basic and acidic residues; it reads DESKESRSPRDDDGHG. The active-site Charge relay system is the His212. Residues Asn352, Asn376, and Asn379 are each glycosylated (N-linked (GlcNAc...) asparagine). The Charge relay system role is filled by Ser542. 2 N-linked (GlcNAc...) asparagine glycosylation sites follow: Asn631 and Asn644.

It belongs to the peptidase S8 family. As to expression, expressed in immature siliques and at lower levels in stems and flowers. Widely expressed at low levels.

Its subcellular location is the secreted. It localises to the cell wall. Its activity is regulated as follows. Activated by calcium. Inhibited by the serine protease inhibitors 4-(2-aminoethyl)benzenesulphonyl fluoride (AEBSF), PMSF, di-isopropyl phosphofluoridate (DFP) and soybean trypsin inhibitor (SBTI). Not inhibited by benzamidine or iodoacetamide. Leupeptin and pepstatin A have a minor inhibitory action. Its function is as follows. Serine protease. Has a substrate preference for the hydrophobic residues Phe and Ala and the basic residue Asp in the P1 position, and for Asp, Leu or Ala in the P1' position. Essential for mucilage release from seed coats. Triggers the accumulation and/or activation of cell wall modifying enzymes necessary either for the loosening of the outer primary cell wall, or to facilitate swelling of the mucilage. The protein is Subtilisin-like protease SBT1.7 of Arabidopsis thaliana (Mouse-ear cress).